The sequence spans 256 residues: Major prion protein (256 aa).

The N-terminal stretch at 1 to 24 is a signal peptide; that stretch reads MVKSHIGSWILVLFVAMWSDVGLC. The segment at 25 to 41 is interaction with ADGRG6; that stretch reads KKRPKPGGGWNTGGSRY. Positions 25-233 are interaction with GRB2, ERI3 and SYN1; the sequence is KKRPKPGGGW…ESEAYYQRRA (209 aa). The segment at 28 to 110 is disordered; the sequence is PKPGGGWNTG…QWNKPSKPKT (83 aa). Tandem repeats lie at residues 54–62, 63–70, 71–78, 79–86, and 87–95. Positions 54–95 are 5 X 8 AA tandem repeats of P-H-G-G-G-W-G-Q; sequence PQGGGGWGQPHGGGWGQPHGGGWGQPHGGGWGQPHGGGGWGQ. A compositionally biased stretch (gly residues) spans 55 to 97; it reads QGGGGWGQPHGGGWGQPHGGGWGQPHGGGWGQPHGGGGWGQGG. Positions 64, 65, 66, 72, 73, 74, 80, 81, 82, 88, 90, and 91 each coordinate Cu(2+). Cysteine 182 and cysteine 217 are disulfide-bonded. N-linked (GlcNAc...) asparagine glycosylation is found at asparagine 184 and asparagine 200. Alanine 233 is lipidated: GPI-anchor amidated alanine. The propeptide at 234-256 is removed in mature form; sequence SAILFSSPPVILLISFLIFLIVG.

This sequence belongs to the prion family. In terms of assembly, monomer and homodimer. Has a tendency to aggregate into amyloid fibrils containing a cross-beta spine, formed by a steric zipper of superposed beta-strands. Soluble oligomers may represent an intermediate stage on the path to fibril formation. Copper binding may promote oligomerization. Interacts with GRB2, APP, ERI3/PRNPIP and SYN1. Mislocalized cytosolically exposed PrP interacts with MGRN1; this interaction alters MGRN1 subcellular location and causes lysosomal enlargement. Interacts with APP. Interacts with KIAA1191. Interacts with ADGRG6.

It is found in the cell membrane. The protein resides in the golgi apparatus. In terms of biological role, its primary physiological function is unclear. May play a role in neuronal development and synaptic plasticity. May be required for neuronal myelin sheath maintenance. May promote myelin homeostasis through acting as an agonist for ADGRG6 receptor. May play a role in iron uptake and iron homeostasis. Soluble oligomers are toxic to cultured neuroblastoma cells and induce apoptosis (in vitro). Association with GPC1 (via its heparan sulfate chains) targets PRNP to lipid rafts. Also provides Cu(2+) or Zn(2+) for the ascorbate-mediated GPC1 deaminase degradation of its heparan sulfate side chains. The chain is Major prion protein (PRNP) from Felis catus (Cat).